We begin with the raw amino-acid sequence, 424 residues long: Keratin, type I cytoskeletal 20 (424 aa).

Residues 1-69 (MDFSRRSFHR…TGGGDLFVGN (69 aa)) form a head region. Serine 13 carries the phosphoserine; by MAPKAPK2, MAPKAPK3 and PKC modification. The tract at residues 70–105 (EKMAMQNLNDRLASYLEKVRTLEQSNSKLEVQIKQW) is coil 1A. Residues 70–381 (EKMAMQNLND…RLLEGEDVKT (312 aa)) enclose the IF rod domain. The segment at 106-123 (YETNAPRAGRDYSAYYRQ) is linker 1. The tract at residues 124–215 (IEELRSQIKD…KEHQEEVDGL (92 aa)) is coil 1B. Residues 216 to 238 (HKHLGNTVNVEVDAAPGLNLGVI) are linker 12. Positions 239-377 (MNEMRQKYEV…ATYRRLLEGE (139 aa)) are coil 2. The interval 378–424 (DVKTTEYQLSTLEERDIKKTRKIKTVVQEVVDGKVVSSEVKEVEENI) is tail.

This sequence belongs to the intermediate filament family. Heterotetramer of two type I and two type II keratins. Associates with KRT8. Post-translationally, hyperphosphorylation at Ser-13 occurs during the early stages of apoptosis but becomes less prominent during the later stages. Phosphorylation at Ser-13 also increases in response to stress brought on by cell injury. In terms of processing, proteolytically cleaved by caspases during apoptosis. Cleavage occurs at Asp-228. In terms of tissue distribution, expressed predominantly in the intestinal epithelium. Expressed in luminal cells of colonic mucosa. Also expressed in the Merkel cells of keratinized oral mucosa; specifically at the tips of some rete ridges of the gingival mucosa, in the basal layer of the palatal mucosa and in the taste buds of lingual mucosa.

Its subcellular location is the cytoplasm. Its function is as follows. Plays a significant role in maintaining keratin filament organization in intestinal epithelia. When phosphorylated, plays a role in the secretion of mucin in the small intestine. This is Keratin, type I cytoskeletal 20 (KRT20) from Homo sapiens (Human).